The chain runs to 87 residues: Defensin-like protein 100 (87 aa).

Positions 1-29 (MRSLRLRTVVVATIVVCLSVLLSPTEVDG) are cleaved as a signal peptide. Disulfide bonds link C31–C79, C38–C64, C44–C76, and C48–C78.

This sequence belongs to the DEFL family.

It localises to the secreted. The polypeptide is Defensin-like protein 100 (Arabidopsis thaliana (Mouse-ear cress)).